Here is a 72-residue protein sequence, read N- to C-terminus: Translation initiation factor IF-1 (72 aa).

The region spanning 1-72 (MPKEEVLEFP…TKGRITYRFK (72 aa)) is the S1-like domain.

Belongs to the IF-1 family. Component of the 30S ribosomal translation pre-initiation complex which assembles on the 30S ribosome in the order IF-2 and IF-3, IF-1 and N-formylmethionyl-tRNA(fMet); mRNA recruitment can occur at any time during PIC assembly.

The protein resides in the cytoplasm. Its function is as follows. One of the essential components for the initiation of protein synthesis. Stabilizes the binding of IF-2 and IF-3 on the 30S subunit to which N-formylmethionyl-tRNA(fMet) subsequently binds. Helps modulate mRNA selection, yielding the 30S pre-initiation complex (PIC). Upon addition of the 50S ribosomal subunit IF-1, IF-2 and IF-3 are released leaving the mature 70S translation initiation complex. The chain is Translation initiation factor IF-1 from Rhizobium etli (strain ATCC 51251 / DSM 11541 / JCM 21823 / NBRC 15573 / CFN 42).